A 435-amino-acid chain; its full sequence is Maltodextrin transport system permease protein MalC (435 aa).

10 helical membrane-spanning segments follow: residues 34–54, 73–93, 130–150, 199–219, 230–250, 263–283, 294–314, 338–358, 371–391, and 404–424; these read GFIF…LATP, FMLI…LFYF, YLLI…PVIV, IIWA…TAII, IFGV…ILTF, TQVL…LIPW, LIMM…LGIL, NITF…QYTF, GGGP…ISWI, and MAAA…MIAF. Positions 195-423 constitute an ABC transmembrane type-1 domain; the sequence is LSWTIIWALA…IIVISISMIA (229 aa).

It belongs to the binding-protein-dependent transport system permease family. MalFG subfamily.

The protein localises to the cell membrane. In terms of biological role, part of the binding-protein-dependent transport system for maltodextrin; probably responsible for the translocation of the substrate across the membrane. This chain is Maltodextrin transport system permease protein MalC (malC), found in Streptococcus pneumoniae serotype 4 (strain ATCC BAA-334 / TIGR4).